A 268-amino-acid chain; its full sequence is Stomatin homolog PYRAB06580 (268 aa).

A helical transmembrane segment spans residues Met1–Leu21. Coiled-coil stretches lie at residues Gly125–Asp152 and Lys178–His213.

It belongs to the band 7/mec-2 family. In terms of assembly, homotrimer.

Its subcellular location is the membrane. The sequence is that of Stomatin homolog PYRAB06580 from Pyrococcus abyssi (strain GE5 / Orsay).